A 204-amino-acid chain; its full sequence is MHDTEFETRAAELIEAGRFIDGRGWVPATSGNFSARLGDGRIAITVSGRHKGRLRPEDIMLVDAAGRSLDGRKPSAETLLHTGIYRRYPEAHAVLHPHSPASTLLSRLVSGAVILEDYELLKALAGIDTHATRIVVPVFPNDQDIPRLALKIEEYLVRHDGVHAYIIAGHGFYTWGKSVADALRHVEALEYLFDLETRMHGVKR.

Residues His-96 and His-98 each contribute to the Zn(2+) site.

It belongs to the aldolase class II family. MtnB subfamily. The cofactor is Zn(2+).

It carries out the reaction 5-(methylsulfanyl)-D-ribulose 1-phosphate = 5-methylsulfanyl-2,3-dioxopentyl phosphate + H2O. The protein operates within amino-acid biosynthesis; L-methionine biosynthesis via salvage pathway; L-methionine from S-methyl-5-thio-alpha-D-ribose 1-phosphate: step 2/6. Catalyzes the dehydration of methylthioribulose-1-phosphate (MTRu-1-P) into 2,3-diketo-5-methylthiopentyl-1-phosphate (DK-MTP-1-P). This Methylococcus capsulatus (strain ATCC 33009 / NCIMB 11132 / Bath) protein is Methylthioribulose-1-phosphate dehydratase.